A 297-amino-acid chain; its full sequence is Pyridoxal 5'-phosphate synthase subunit PdxS (297 aa).

D27 lines the D-ribose 5-phosphate pocket. K84 serves as the catalytic Schiff-base intermediate with D-ribose 5-phosphate. Residue G156 participates in D-ribose 5-phosphate binding. Residue R168 participates in D-glyceraldehyde 3-phosphate binding. Residues G217 and 238-239 (GS) contribute to the D-ribose 5-phosphate site.

Belongs to the PdxS/SNZ family. As to quaternary structure, in the presence of PdxT, forms a dodecamer of heterodimers.

The catalysed reaction is aldehydo-D-ribose 5-phosphate + D-glyceraldehyde 3-phosphate + L-glutamine = pyridoxal 5'-phosphate + L-glutamate + phosphate + 3 H2O + H(+). It functions in the pathway cofactor biosynthesis; pyridoxal 5'-phosphate biosynthesis. Catalyzes the formation of pyridoxal 5'-phosphate from ribose 5-phosphate (RBP), glyceraldehyde 3-phosphate (G3P) and ammonia. The ammonia is provided by the PdxT subunit. Can also use ribulose 5-phosphate and dihydroxyacetone phosphate as substrates, resulting from enzyme-catalyzed isomerization of RBP and G3P, respectively. This chain is Pyridoxal 5'-phosphate synthase subunit PdxS, found in Corynebacterium diphtheriae (strain ATCC 700971 / NCTC 13129 / Biotype gravis).